We begin with the raw amino-acid sequence, 98 residues long: Lipolysis-activating peptide 1-alpha chain (98 aa).

The first 22 residues, 1–22 (MMKLVLFGIIVILFSMIGSIHG), serve as a signal peptide directing secretion. The region spanning 26-89 (PGNYPLNTYG…IWDAVKRHCK (64 aa)) is the LCN-type CS-alpha/beta domain. Disulfide bonds link Cys-40–Cys-63, Cys-49–Cys-68, and Cys-53–Cys-70. Lysine amide is present on Lys-96.

Belongs to the long (3 C-C) scorpion toxin superfamily. In terms of assembly, monomer (edited version) and heterodimer (non-edited version) of this alpha chain and a beta chain (AC B8XGZ8). Expressed by the venom gland.

It localises to the secreted. Its function is as follows. The heterodimer non-edited LVP1 induces lipolysis in rat adipocytes. Induction of lipolysis by LVP1 appears to be mediated through the beta-2 adrenergic receptor pathway (ADRB2). The edited BmKBTx-like, similar to beta-toxins, may modulate voltage-gated sodium channels (Nav) and may block voltage-gated potassium channels (Kv). This is Lipolysis-activating peptide 1-alpha chain from Buthus israelis (Israeli scorpion).